The following is a 228-amino-acid chain: U1 small nuclear ribonucleoprotein C (228 aa).

The segment at 11-43 (ATVDYCDIFLTHDSASVRKAHNTGWKHKMQVEH) adopts a Matrin-type; degenerate zinc-finger fold. The tract at residues 83–127 (GQRGQPVGGPPRPPQPFHNGGRPGPPGRPPMGMFPPQRPMMPPPH) is disordered. Residues 105 to 127 (PGPPGRPPMGMFPPQRPMMPPPH) are compositionally biased toward pro residues.

The protein belongs to the U1 small nuclear ribonucleoprotein C family. As to quaternary structure, U1 snRNP is composed of the 7 core Sm proteins B/B', D1, D2, D3, E, F and G that assemble in a heptameric protein ring on the Sm site of the small nuclear RNA to form the core snRNP, and at least 3 U1 snRNP-specific proteins U1-70K, U1-A and U1-C. U1-C interacts with U1 snRNA and the 5' splice-site region of the pre-mRNA.

The protein localises to the nucleus. Component of the spliceosomal U1 snRNP, which is essential for recognition of the pre-mRNA 5' splice-site and the subsequent assembly of the spliceosome. U1-C is directly involved in initial 5' splice-site recognition for both constitutive and regulated alternative splicing. The interaction with the 5' splice-site seems to precede base-pairing between the pre-mRNA and the U1 snRNA. Stimulates commitment or early (E) complex formation by stabilizing the base pairing of the 5' end of the U1 snRNA and the 5' splice-site region. This is U1 small nuclear ribonucleoprotein C from Batrachochytrium dendrobatidis (strain JAM81 / FGSC 10211) (Frog chytrid fungus).